Consider the following 90-residue polypeptide: Arminin 45266 (90 aa).

The N-terminal stretch at 1–20 (MKSASLILFVALVALTYARS) is a signal peptide. A propeptide spanning residues 21 to 59 (YEDVKEEIKNEVEKEILDDLEEENDELDDNTQEVNDPRA) is cleaved from the precursor. The residue at position 87 (Thr-87) is a Threonine amide.

The protein belongs to the arminin family. In terms of tissue distribution, expressed in entodermal epithelium along the body column.

It localises to the secreted. Its subcellular location is the target cell membrane. Antimicrobial peptide with a broad-spectrum antimicrobial activity. Keeps its antibacterial activity under a wide range of salt concentrations that mimic physiological conditions of human blood, which is surprising, since Hydra is an obligate freshwater animal with nearly no salt tolerance. Does not affect red blood cells. The protein is Arminin 45266 of Hydra vulgaris (Hydra).